Reading from the N-terminus, the 374-residue chain is Cobalt-precorrin-5B C(1)-methyltransferase (374 aa).

This sequence belongs to the CbiD family.

It catalyses the reaction Co-precorrin-5B + S-adenosyl-L-methionine = Co-precorrin-6A + S-adenosyl-L-homocysteine. It functions in the pathway cofactor biosynthesis; adenosylcobalamin biosynthesis; cob(II)yrinate a,c-diamide from sirohydrochlorin (anaerobic route): step 6/10. Its function is as follows. Catalyzes the methylation of C-1 in cobalt-precorrin-5B to form cobalt-precorrin-6A. The polypeptide is Cobalt-precorrin-5B C(1)-methyltransferase (Synechococcus elongatus (strain ATCC 33912 / PCC 7942 / FACHB-805) (Anacystis nidulans R2)).